A 622-amino-acid chain; its full sequence is Low affinity potassium transport system protein Kup (622 aa).

12 helical membrane-spanning segments follow: residues leucine 9–leucine 29, valine 49–leucine 69, valine 103–isoleucine 123, proline 137–isoleucine 157, valine 165–leucine 185, valine 213–alanine 233, tryptophan 247–leucine 267, proline 276–alanine 296, isoleucine 337–phenylalanine 357, leucine 363–threonine 383, phenylalanine 396–leucine 416, and leucine 419–threonine 439.

It belongs to the HAK/KUP transporter (TC 2.A.72) family.

It is found in the cell inner membrane. The catalysed reaction is K(+)(in) + H(+)(in) = K(+)(out) + H(+)(out). Its function is as follows. Responsible for the low-affinity transport of potassium into the cell. Likely operates as a K(+):H(+) symporter. The sequence is that of Low affinity potassium transport system protein Kup from Shigella flexneri.